Here is a 366-residue protein sequence, read N- to C-terminus: Tyrosine--tRNA ligase (366 aa).

L-tyrosine contacts are provided by Y41, Y167, Q171, D174, and Q189. Residues 241–245 (KMSKS) carry the 'KMSKS' region motif. K244 lines the ATP pocket.

Belongs to the class-I aminoacyl-tRNA synthetase family. TyrS type 4 subfamily. Homodimer.

It localises to the cytoplasm. The catalysed reaction is tRNA(Tyr) + L-tyrosine + ATP = L-tyrosyl-tRNA(Tyr) + AMP + diphosphate + H(+). Functionally, catalyzes the attachment of tyrosine to tRNA(Tyr) in a two-step reaction: tyrosine is first activated by ATP to form Tyr-AMP and then transferred to the acceptor end of tRNA(Tyr). This is Tyrosine--tRNA ligase from Saccharolobus solfataricus (strain ATCC 35092 / DSM 1617 / JCM 11322 / P2) (Sulfolobus solfataricus).